A 413-amino-acid polypeptide reads, in one-letter code: N-acylneuraminate cytidylyltransferase (413 aa).

This sequence belongs to the CMP-NeuNAc synthase family. Requires Mg(2+) as cofactor. Mn(2+) is required as a cofactor.

The protein resides in the cytoplasm. It catalyses the reaction an N-acylneuraminate + CTP = a CMP-N-acyl-beta-neuraminate + diphosphate. Functionally, catalyzes the formation of CMP-N-acetylneuraminic acid (CMP-NeuNAc), which is essential for the formation of the capsule. The polypeptide is N-acylneuraminate cytidylyltransferase (neuA) (Streptococcus agalactiae serotype V (strain ATCC BAA-611 / 2603 V/R)).